Reading from the N-terminus, the 180-residue chain is tRNA-splicing endonuclease (180 aa).

Catalysis depends on residues Tyr-117, His-125, and Lys-156.

This sequence belongs to the tRNA-intron endonuclease family. Archaeal short subfamily. As to quaternary structure, homotetramer; although the tetramer contains four active sites, only two participate in the cleavage. Therefore, it should be considered as a dimer of dimers.

The enzyme catalyses pretRNA = a 3'-half-tRNA molecule with a 5'-OH end + a 5'-half-tRNA molecule with a 2',3'-cyclic phosphate end + an intron with a 2',3'-cyclic phosphate and a 5'-hydroxyl terminus.. In terms of biological role, endonuclease that removes tRNA introns. Cleaves pre-tRNA at the 5'- and 3'-splice sites to release the intron. The products are an intron and two tRNA half-molecules bearing 2',3' cyclic phosphate and 5'-OH termini. Recognizes a pseudosymmetric substrate in which 2 bulged loops of 3 bases are separated by a stem of 4 bp. This is tRNA-splicing endonuclease from Sulfurisphaera tokodaii (strain DSM 16993 / JCM 10545 / NBRC 100140 / 7) (Sulfolobus tokodaii).